Reading from the N-terminus, the 525-residue chain is D-arabinono-1,4-lactone oxidase (525 aa).

Residues I20–A195 form the FAD-binding PCMH-type domain. H58 carries the pros-8alpha-FAD histidine modification.

The protein belongs to the oxygen-dependent FAD-linked oxidoreductase family. FAD is required as a cofactor.

The protein resides in the mitochondrion membrane. It carries out the reaction D-arabinono-1,4-lactone + O2 = dehydro-D-arabinono-1,4-lactone + H2O2 + H(+). It functions in the pathway cofactor biosynthesis; D-erythroascorbate biosynthesis; dehydro-D-arabinono-1,4-lactone from D-arabinose: step 2/2. The chain is D-arabinono-1,4-lactone oxidase (ALO1) from Candida glabrata (strain ATCC 2001 / BCRC 20586 / JCM 3761 / NBRC 0622 / NRRL Y-65 / CBS 138) (Yeast).